Reading from the N-terminus, the 234-residue chain is MMTYYFIADLHLNESQPQITHQFLQFMQQKAPLAQAVYILGDFFDFWIGDDEQSVLISQVKLALKKLTASGVKCYFICGNRDFLLGQTFAQQTGIQLLADYHLLDLFGERTLLCHGDTLCIDDIKYQQFRRRVHQKRLQKLFLWLPLTLRIKIAQKIRRKSKQDKKNKSADIMDVNQAFTAQKVHQYGATHLIHGHTHRQAVHFEQNFTRIVLGDWRPDRSSILKVDEKGFEFL.

Mn(2+)-binding residues include aspartate 9, histidine 11, aspartate 42, asparagine 80, and histidine 115. 80 to 81 (NR) lines the substrate pocket. The substrate site is built by aspartate 123, serine 161, lysine 165, lysine 168, and histidine 196. Histidine 196 and histidine 198 together coordinate Mn(2+).

This sequence belongs to the LpxH family. It depends on Mn(2+) as a cofactor.

Its subcellular location is the cell inner membrane. It carries out the reaction UDP-2-N,3-O-bis[(3R)-3-hydroxytetradecanoyl]-alpha-D-glucosamine + H2O = 2-N,3-O-bis[(3R)-3-hydroxytetradecanoyl]-alpha-D-glucosaminyl 1-phosphate + UMP + 2 H(+). The protein operates within glycolipid biosynthesis; lipid IV(A) biosynthesis; lipid IV(A) from (3R)-3-hydroxytetradecanoyl-[acyl-carrier-protein] and UDP-N-acetyl-alpha-D-glucosamine: step 4/6. Hydrolyzes the pyrophosphate bond of UDP-2,3-diacylglucosamine to yield 2,3-diacylglucosamine 1-phosphate (lipid X) and UMP by catalyzing the attack of water at the alpha-P atom. Involved in the biosynthesis of lipid A, a phosphorylated glycolipid that anchors the lipopolysaccharide to the outer membrane of the cell. This chain is UDP-2,3-diacylglucosamine hydrolase, found in Haemophilus ducreyi (strain 35000HP / ATCC 700724).